A 657-amino-acid polypeptide reads, in one-letter code: Protein translocase subunit SecA 2 (657 aa).

Residues Gln-93, 111-115, and Asp-531 each bind ATP; that span reads GEGKT.

The protein belongs to the SecA family. As to quaternary structure, monomer and homodimer. Part of the essential Sec protein translocation apparatus which comprises SecA, SecYEG and auxiliary proteins SecDF. Other proteins may also be involved.

It localises to the cell inner membrane. The protein localises to the cytoplasm. It catalyses the reaction ATP + H2O + cellular proteinSide 1 = ADP + phosphate + cellular proteinSide 2.. In terms of biological role, part of the Sec protein translocase complex. Interacts with the SecYEG preprotein conducting channel. Has a central role in coupling the hydrolysis of ATP to the transfer of proteins into and across the cell membrane, serving as an ATP-driven molecular motor driving the stepwise translocation of polypeptide chains across the membrane. This Rhodopirellula baltica (strain DSM 10527 / NCIMB 13988 / SH1) protein is Protein translocase subunit SecA 2.